Consider the following 383-residue polypeptide: Na(+)/H(+) antiporter NhaA (383 aa).

11 helical membrane passes run 10-30, 56-76, 91-111, 121-141, 150-170, 174-194, 206-226, 254-274, 275-295, 327-347, and 355-375; these read LIGG…NNSP, LMHW…GLEI, IITP…IYLS, GWAI…ALLG, LLVI…IAIF, SLSL…IICN, VVLG…ATLA, PWII…ISFS, GISF…GLFV, GISL…VLAF, and AIKI…YIVL.

The protein belongs to the NhaA Na(+)/H(+) (TC 2.A.33) antiporter family.

Its subcellular location is the cell inner membrane. The enzyme catalyses Na(+)(in) + 2 H(+)(out) = Na(+)(out) + 2 H(+)(in). In terms of biological role, na(+)/H(+) antiporter that extrudes sodium in exchange for external protons. The chain is Na(+)/H(+) antiporter NhaA from Francisella tularensis subsp. novicida (strain U112).